A 394-amino-acid chain; its full sequence is S-adenosylmethionine synthase 3 (394 aa).

E11 contacts Mg(2+). ATP is bound at residue H17. Residue E45 participates in K(+) binding. Residues E58 and Q101 each coordinate L-methionine. Residues 169-171 (DGK), 237-240 (SGRF), D248, 254-255 (RK), A271, K275, and K279 contribute to the ATP site. Position 248 (D248) interacts with L-methionine. K279 contacts L-methionine.

This sequence belongs to the AdoMet synthase family. In terms of assembly, homotetramer. The cofactor is Mn(2+). It depends on Mg(2+) as a cofactor. Co(2+) serves as cofactor. K(+) is required as a cofactor.

It localises to the cytoplasm. The enzyme catalyses L-methionine + ATP + H2O = S-adenosyl-L-methionine + phosphate + diphosphate. It participates in amino-acid biosynthesis; S-adenosyl-L-methionine biosynthesis; S-adenosyl-L-methionine from L-methionine: step 1/1. In terms of biological role, catalyzes the formation of S-adenosylmethionine from methionine and ATP. The reaction comprises two steps that are both catalyzed by the same enzyme: formation of S-adenosylmethionine (AdoMet) and triphosphate, and subsequent hydrolysis of the triphosphate. This Hordeum vulgare (Barley) protein is S-adenosylmethionine synthase 3 (SAM3).